A 357-amino-acid polypeptide reads, in one-letter code: Probable cinnamyl alcohol dehydrogenase 2 (357 aa).

Residue cysteine 47 participates in Zn(2+) binding. An NADP(+)-binding site is contributed by serine 49. Zn(2+) is bound by residues histidine 69, glutamate 70, cysteine 100, cysteine 103, cysteine 106, cysteine 114, and cysteine 163. NADP(+)-binding positions include threonine 167, 188–193 (GLGGVG), 211–216 (SSSNKK), threonine 251, glycine 275, and 298–300 (SFI).

This sequence belongs to the zinc-containing alcohol dehydrogenase family. In terms of assembly, homodimer. Requires Zn(2+) as cofactor. Post-translationally, the N-terminus is blocked.

The enzyme catalyses (E)-cinnamyl alcohol + NADP(+) = (E)-cinnamaldehyde + NADPH + H(+). The catalysed reaction is (E)-coniferol + NADP(+) = (E)-coniferaldehyde + NADPH + H(+). It carries out the reaction (E)-sinapyl alcohol + NADP(+) = (E)-sinapaldehyde + NADPH + H(+). It catalyses the reaction (E)-4-coumaroyl alcohol + NADP(+) = (E)-4-coumaraldehyde + NADPH + H(+). The enzyme catalyses (E)-caffeyl alcohol + NADP(+) = (E)-caffeyl aldehyde + NADPH + H(+). It functions in the pathway aromatic compound metabolism; phenylpropanoid biosynthesis. Its function is as follows. Involved in lignin biosynthesis. Catalyzes the final step specific for the production of lignin monomers. Catalyzes the NADPH-dependent reduction of coniferaldehyde, 5-hydroxyconiferaldehyde, sinapaldehyde, 4-coumaraldehyde and caffeyl aldehyde to their respective alcohols. In Nicotiana tabacum (Common tobacco), this protein is Probable cinnamyl alcohol dehydrogenase 2 (CAD19).